The primary structure comprises 448 residues: Phosphoglucosamine mutase (448 aa).

The Phosphoserine intermediate role is filled by Ser-104. Mg(2+) is bound by residues Ser-104, Asp-243, Asp-245, and Asp-247. Ser-104 carries the post-translational modification Phosphoserine.

It belongs to the phosphohexose mutase family. Requires Mg(2+) as cofactor. Post-translationally, activated by phosphorylation.

The enzyme catalyses alpha-D-glucosamine 1-phosphate = D-glucosamine 6-phosphate. In terms of biological role, catalyzes the conversion of glucosamine-6-phosphate to glucosamine-1-phosphate. This chain is Phosphoglucosamine mutase, found in Xylella fastidiosa (strain Temecula1 / ATCC 700964).